We begin with the raw amino-acid sequence, 61 residues long: MAVPKRKTSPSRRGMRRSADALKAPTYVEDKDSGELRRPHHIDLKTGMYRGRQVLKVKTEA.

Residues Met1–Arg16 are compositionally biased toward basic residues. The segment at Met1–Leu44 is disordered. Positions Val28 to Leu44 are enriched in basic and acidic residues.

The protein belongs to the bacterial ribosomal protein bL32 family.

This chain is Large ribosomal subunit protein bL32, found in Methylobacterium nodulans (strain LMG 21967 / CNCM I-2342 / ORS 2060).